A 428-amino-acid chain; its full sequence is MGPPPGIGVYCRGGCGAARLLAWCFLLALSPHAPGSRGAEAVWTAYLNVSWRVPHTGVNRTVWELSEEGVYGQDSPLEPVSGVLVPPDGPGALNACNPHTNFTVPTVWGSTVQVSWLALIQRGGGCTFADKIHLASERGASGAVIFNFPGTRNEVIPMSHPGAGDIVAIMIGNLKGTKILQSIQRGIQVTMVIEVGKKHGPWVNHYSIFFVSVSFFIITAATVGYFIFYSARRLRNARAQSRKQRQLKADAKKAIGKLQLRTLKQGDKEIGPDGDSCAVCIELYKPNDLVRILTCNHIFHKTCVDPWLLEHRTCPMCKCDILKALGIEVDVEDGSVSLQVPVSNEASNTASPHEEDSRSETASSGYASVQGADEPPLEEHAQSANENLQLVNHEANSVAVDVVPHVDNPTFEEDETPDQEAAVREIKS.

Positions 1–38 (MGPPPGIGVYCRGGCGAARLLAWCFLLALSPHAPGSRG) are cleaved as a signal peptide. 3 N-linked (GlcNAc...) asparagine glycosylation sites follow: asparagine 48, asparagine 59, and asparagine 101. Residues 75-183 (SPLEPVSGVL…LKGTKILQSI (109 aa)) enclose the PA domain. The helical transmembrane segment at 208-228 (IFFVSVSFFIITAATVGYFIF) threads the bilayer. Residues 277–318 (CAVCIELYKPNDLVRILTCNHIFHKTCVDPWLLEHRTCPMCK) form an RING-type; atypical zinc finger. Positions 342–351 (VSNEASNTAS) are enriched in polar residues. Residues 342–428 (VSNEASNTAS…QEAAVREIKS (87 aa)) form a disordered region.

Auto-ubiquitinated. Controls the development of T-cell clonal anergy by ubiquitination. In terms of tissue distribution, expressed in brain, kidney, heart, liver, ovary, testis and thymus. Expression increased as early as 4 hours by 5- to 7-fold in anergized cultures as compared to resting or activated cells.

The protein resides in the cytoplasm. It is found in the endomembrane system. It localises to the cytoskeleton. Its subcellular location is the perinuclear region. It carries out the reaction S-ubiquitinyl-[E2 ubiquitin-conjugating enzyme]-L-cysteine + [acceptor protein]-L-lysine = [E2 ubiquitin-conjugating enzyme]-L-cysteine + N(6)-ubiquitinyl-[acceptor protein]-L-lysine.. Its pathway is protein modification; protein ubiquitination. Functionally, E3 ubiquitin-protein ligase that catalyzes 'Lys-27', 'Lys-48'- or 'Lys-63'-linked polyubiquitin chains formation and plays a role in different biological processes such as modulation of immune response, cytoskeletal dynamics or protein homeostasis. Inhibits IL2 and IL4 transcription, thereby playing an important role in the induction of the anergic phenotype, a long-term stable state of T-lymphocyte unresponsiveness to antigenic stimulation associated with the blockade of interleukin production. Ubiquitinates ARPC5 with 'Lys-48' linkages and COR1A with 'Lys-63' linkages leading to their degradation, down-regulation of these cytoskeletal components results in impaired lamellipodium formation and reduced accumulation of F-actin at the immunological synapse. Functions in the patterning of the dorsal ectoderm; sensitizes ectoderm to respond to neural-inducing signals. Plays a positive role in innate immune response by promoting 'Lys-63'-linked ubiquitination of TBK1 after RNA- or DNA-virus infection. Regulates alveolar macrophage activation and neutrophil infiltration by interacting with TLR4, targeting it for degradation, and inhibiting NF-kappa-B activation, hence decreasing pro-inflammatory cytokines. Negatively regulates the IL-3/STAT5 signaling pathway by facilitating 'Lys-27'-linked polyubiquitination of IL3RA leading to its degradation via lysosomal pathway. Directly regulates the N-glycosylation process in the endoplasmic reticulum by targeting the glycosyl-transferase RPN1 for ubiquitination and degradation. Other substrates targeted for degradation by RNF128 include transmembrane proteins CD40L, CD83 or the tetraspanin CD151. This Mus musculus (Mouse) protein is E3 ubiquitin-protein ligase RNF128 (Rnf128).